The primary structure comprises 1265 residues: Protein FAM193A (1265 aa).

The stretch at 107-142 (SEDTYSTLLQRYQRSEEELRRVAEEWLECQKRIDAY) forms a coiled coil. The tract at residues 247–272 (APDYLAERSPPSVSSASSGSGSSSPI) is disordered. The span at 255 to 271 (SPPSVSSASSGSGSSSP) shows a compositional bias: low complexity. Ser-293 carries the phosphoserine modification. Disordered regions lie at residues 331 to 407 (NGGG…EQAP), 553 to 586 (GSEI…SKEK), 626 to 674 (VQSS…APLP), 750 to 785 (ENGV…NQKE), 822 to 841 (LTKR…ERES), 859 to 881 (ETKP…KLEE), and 893 to 1163 (EHLH…DRVN). Acidic residues predominate over residues 355–365 (EADDEEADGES). At Ser-383 the chain carries Phosphoserine. The residue at position 642 (Ser-642) is a Phosphoserine. Residues 757 to 769 (QQDDGDESADEDS) show a composition bias toward acidic residues. Positions 772–781 (EHSSSTSTST) are enriched in low complexity. The span at 868–877 (AAKRARHKQR) shows a compositional bias: basic residues. Residues 873–932 (RHKQRKLEEKARLEAEARAREHLHLQEEQRRREEEEDEEEEEDRFKEEFQRLQELQKLRA) adopt a coiled-coil conformation. Basic and acidic residues-rich tracts occupy residues 893–905 (EHLH…RRRE) and 915–929 (DRFK…ELQK). The segment covering 931–940 (RAVKKKKKER) has biased composition (basic residues). Polar residues predominate over residues 953–973 (RNFQAATESVPNSGNIHNGSL). Positions 1093-1118 (TEQKREERKVNSNNNNKKQLNHIKDE) form a coiled coil. 2 positions are modified to phosphoserine: Ser-1129 and Ser-1144. Over residues 1149–1159 (GKNKKNKKKKG) the composition is skewed to basic residues.

Belongs to the FAM193 family.

The chain is Protein FAM193A (FAM193A) from Homo sapiens (Human).